Reading from the N-terminus, the 508-residue chain is MIYEESKMNLEQERPFVCSAPGCSQRFPTEDHLMIHRHKHEMTLKFPSIKTDNMLSDQTPTPTRFLKNCEEVGLFSELDCSLEHEFRKAQEEESSKRNISMHNAVGGAMTGPGTHQLSSARLPNHDTNVVIQQAMPSPQSSSVITQAPSTNRQIGPVPGSLSSLLHLHNRQRQPMPASMPGTLPNPTMPGSSAVLMPMERQMSVNSSIMGMQGPNLSNPCASPQVQPMHSEAKMRLKAALTHHPAAMSNGNMNTMGHMMEMMGSRQDQTPHHHMHSHPHQHQTLPPHHPYPHQHQHPAHHPHPQPHHQQNHPHHHSHSHLHAHPAHHQTSPHPPLHTGNQAQVSPATQQMQPTQTIQPPQPTGGRRRRVVDEDPDERRRKFLERNRAAATRCRQKRKVWVMSLEKKAEELTQTNMQLQNEVSMLKNEVAQLKQLLLTHKDCPITAMQKESQGYLSPESSPPASPVPACSQQQVIQHNTITTSSSVSEVVGSSTLSQLTTHRTDLNPIL.

The C2H2-type zinc finger occupies 16 to 40 (FVCSAPGCSQRFPTEDHLMIHRHKH). A Glycyl lysine isopeptide (Lys-Gly) (interchain with G-Cter in SUMO2) cross-link involves residue lysine 50. Threonine 59 and threonine 61 each carry phosphothreonine. Serine 137 bears the Phosphoserine mark. The interval 265–391 (RQDQTPHHHM…LERNRAAATR (127 aa)) is disordered. Basic residues-rich tracts occupy residues 271–280 (HHHMHSHPHQ) and 289–326 (PYPH…HPAH). Over residues 337–346 (TGNQAQVSPA) the composition is skewed to polar residues. A compositionally biased stretch (low complexity) spans 347–357 (TQQMQPTQTIQ). A compositionally biased stretch (basic and acidic residues) spans 369 to 386 (VVDEDPDERRRKFLERNR). Positions 375–438 (DERRRKFLER…AQLKQLLLTH (64 aa)) constitute a bZIP domain. A basic motif region spans residues 377–397 (RRRKFLERNRAAATRCRQKRK). Positions 403–431 (LEKKAEELTQTNMQLQNEVSMLKNEVAQL) are leucine-zipper. The interval 449 to 468 (ESQGYLSPESSPPASPVPAC) is disordered.

It belongs to the bZIP family. In terms of assembly, binds DNA as a homodimer or as a heterodimer with JUN or ATF2/CREBP1.

It localises to the nucleus. Binds to the cAMP response element and activates transcription. This is Cyclic AMP-responsive element-binding protein 5 (CREB5) from Homo sapiens (Human).